A 205-amino-acid polypeptide reads, in one-letter code: Holliday junction branch migration complex subunit RuvA (205 aa).

The segment at 1–64 is domain I; that stretch reads MIGKLKGVVD…EDMIRLYGFR (64 aa). The segment at 65–143 is domain II; the sequence is SDAEREWFRL…AFAPVDPALV (79 aa). Residues 144-152 are flexible linker; that stretch reads ALAGAVEEG. The domain III stretch occupies residues 153–205; it reads AAPQPVADAVSALVNLGYPQVQAAAAIAAALKGAGEGAEAKVLIRLGLRELAR.

It belongs to the RuvA family. In terms of assembly, homotetramer. Forms an RuvA(8)-RuvB(12)-Holliday junction (HJ) complex. HJ DNA is sandwiched between 2 RuvA tetramers; dsDNA enters through RuvA and exits via RuvB. An RuvB hexamer assembles on each DNA strand where it exits the tetramer. Each RuvB hexamer is contacted by two RuvA subunits (via domain III) on 2 adjacent RuvB subunits; this complex drives branch migration. In the full resolvosome a probable DNA-RuvA(4)-RuvB(12)-RuvC(2) complex forms which resolves the HJ.

It is found in the cytoplasm. The RuvA-RuvB-RuvC complex processes Holliday junction (HJ) DNA during genetic recombination and DNA repair, while the RuvA-RuvB complex plays an important role in the rescue of blocked DNA replication forks via replication fork reversal (RFR). RuvA specifically binds to HJ cruciform DNA, conferring on it an open structure. The RuvB hexamer acts as an ATP-dependent pump, pulling dsDNA into and through the RuvAB complex. HJ branch migration allows RuvC to scan DNA until it finds its consensus sequence, where it cleaves and resolves the cruciform DNA. In Methylobacterium radiotolerans (strain ATCC 27329 / DSM 1819 / JCM 2831 / NBRC 15690 / NCIMB 10815 / 0-1), this protein is Holliday junction branch migration complex subunit RuvA.